A 305-amino-acid polypeptide reads, in one-letter code: Ubiquinone biosynthesis protein COQ4 homolog, mitochondrial (305 aa).

Residues histidine 150, aspartate 151, histidine 154, and glutamate 166 each coordinate Zn(2+).

This sequence belongs to the COQ4 family. In terms of assembly, component of a multi-subunit COQ enzyme complex. It depends on Zn(2+) as a cofactor.

The protein resides in the mitochondrion inner membrane. It carries out the reaction a 4-hydroxy-3-methoxy-5-(all-trans-polyprenyl)benzoate + H(+) = a 2-methoxy-6-(all-trans-polyprenyl)phenol + CO2. The protein operates within cofactor biosynthesis; ubiquinone biosynthesis. In terms of biological role, lyase that catalyzes the C1-decarboxylation of 4-hydroxy-3-methoxy-5-(all-trans-polyprenyl)benzoic acid into 2-methoxy-6-(all-trans-polyprenyl)phenol during ubiquinone biosynthesis. The sequence is that of Ubiquinone biosynthesis protein COQ4 homolog, mitochondrial from Cryptosporidium parvum (strain Iowa II).